The primary structure comprises 175 residues: Adenine phosphoribosyltransferase (175 aa).

The protein belongs to the purine/pyrimidine phosphoribosyltransferase family. As to quaternary structure, homodimer.

The protein resides in the cytoplasm. It catalyses the reaction AMP + diphosphate = 5-phospho-alpha-D-ribose 1-diphosphate + adenine. It functions in the pathway purine metabolism; AMP biosynthesis via salvage pathway; AMP from adenine: step 1/1. Catalyzes a salvage reaction resulting in the formation of AMP, that is energically less costly than de novo synthesis. This Lactobacillus acidophilus (strain ATCC 700396 / NCK56 / N2 / NCFM) protein is Adenine phosphoribosyltransferase.